Here is a 426-residue protein sequence, read N- to C-terminus: Proline--tRNA ligase (426 aa).

It belongs to the class-II aminoacyl-tRNA synthetase family. ProS type 2 subfamily. Homodimer.

It is found in the cytoplasm. The catalysed reaction is tRNA(Pro) + L-proline + ATP = L-prolyl-tRNA(Pro) + AMP + diphosphate. Catalyzes the attachment of proline to tRNA(Pro) in a two-step reaction: proline is first activated by ATP to form Pro-AMP and then transferred to the acceptor end of tRNA(Pro). The chain is Proline--tRNA ligase from Rickettsia africae (strain ESF-5).